A 307-amino-acid chain; its full sequence is Cilia-and flagella-associated protein 96 (307 aa).

2 disordered regions span residues 73–102 (YSDP…SSGE) and 218–279 (HSQK…GPKT).

Belongs to the CFAP96 family.

It localises to the cytoplasm. It is found in the cytoskeleton. The protein resides in the microtubule organizing center. The protein localises to the centrosome. The protein is Cilia-and flagella-associated protein 96 (cfap96.L) of Xenopus laevis (African clawed frog).